The sequence spans 290 residues: Shikimate dehydrogenase (NADP(+)) (290 aa).

Shikimate is bound by residues 19-21 (SLS) and S65. K69 functions as the Proton acceptor in the catalytic mechanism. Shikimate contacts are provided by N90 and D105. NADP(+) is bound by residues 129–133 (GAGGA) and L231. Y233 serves as a coordination point for shikimate. G254 is a binding site for NADP(+).

This sequence belongs to the shikimate dehydrogenase family. Homodimer.

It catalyses the reaction shikimate + NADP(+) = 3-dehydroshikimate + NADPH + H(+). Its pathway is metabolic intermediate biosynthesis; chorismate biosynthesis; chorismate from D-erythrose 4-phosphate and phosphoenolpyruvate: step 4/7. Its function is as follows. Involved in the biosynthesis of the chorismate, which leads to the biosynthesis of aromatic amino acids. Catalyzes the reversible NADPH linked reduction of 3-dehydroshikimate (DHSA) to yield shikimate (SA). This is Shikimate dehydrogenase (NADP(+)) from Latilactobacillus sakei subsp. sakei (strain 23K) (Lactobacillus sakei subsp. sakei).